Reading from the N-terminus, the 160-residue chain is Large ribosomal subunit protein uL10 (160 aa).

It belongs to the universal ribosomal protein uL10 family. Part of the ribosomal stalk of the 50S ribosomal subunit. The N-terminus interacts with L11 and the large rRNA to form the base of the stalk. The C-terminus forms an elongated spine to which L12 dimers bind in a sequential fashion forming a multimeric L10(L12)X complex.

Forms part of the ribosomal stalk, playing a central role in the interaction of the ribosome with GTP-bound translation factors. The polypeptide is Large ribosomal subunit protein uL10 (Wolinella succinogenes (strain ATCC 29543 / DSM 1740 / CCUG 13145 / JCM 31913 / LMG 7466 / NCTC 11488 / FDC 602W) (Vibrio succinogenes)).